Here is a 204-residue protein sequence, read N- to C-terminus: Glycerol-3-phosphate acyltransferase (204 aa).

A run of 4 helical transmembrane segments spans residues Asn8 to Ala28, Gly76 to Ile96, Met122 to Leu142, and Phe166 to Tyr186.

It belongs to the PlsY family. Probably interacts with PlsX.

Its subcellular location is the cell inner membrane. It catalyses the reaction an acyl phosphate + sn-glycerol 3-phosphate = a 1-acyl-sn-glycero-3-phosphate + phosphate. It participates in lipid metabolism; phospholipid metabolism. Its function is as follows. Catalyzes the transfer of an acyl group from acyl-phosphate (acyl-PO(4)) to glycerol-3-phosphate (G3P) to form lysophosphatidic acid (LPA). This enzyme utilizes acyl-phosphate as fatty acyl donor, but not acyl-CoA or acyl-ACP. The sequence is that of Glycerol-3-phosphate acyltransferase from Sulfurimonas denitrificans (strain ATCC 33889 / DSM 1251) (Thiomicrospira denitrificans (strain ATCC 33889 / DSM 1251)).